We begin with the raw amino-acid sequence, 412 residues long: Alanyl-tRNA editing protein Aarsd1-A (412 aa).

4 residues coordinate Zn(2+): His-108, His-112, Cys-208, and His-212.

Belongs to the class-II aminoacyl-tRNA synthetase family. Alax-L subfamily. It depends on Zn(2+) as a cofactor.

The protein localises to the cytoplasm. Functionally, functions in trans to edit the amino acid moiety from incorrectly charged tRNA(Ala). In Xenopus laevis (African clawed frog), this protein is Alanyl-tRNA editing protein Aarsd1-A (aarsd1-a).